We begin with the raw amino-acid sequence, 260 residues long: Small ribosomal subunit protein uS3 (260 aa).

A KH type-2 domain is found at 39–114; that stretch reads LRQYIEQKLG…QIRINVVEVQ (76 aa). The tract at residues 218 to 260 is disordered; it reads QEVATPPPSPRDRDRDRGDRDREPRRRQQQRRRQQFEDRSNEG. Basic and acidic residues-rich tracts occupy residues 227–243 and 251–260; these read PRDR…EPRR and QQFEDRSNEG.

It belongs to the universal ribosomal protein uS3 family. As to quaternary structure, part of the 30S ribosomal subunit. Forms a tight complex with proteins S10 and S14.

Functionally, binds the lower part of the 30S subunit head. Binds mRNA in the 70S ribosome, positioning it for translation. The chain is Small ribosomal subunit protein uS3 from Nostoc sp. (strain PCC 7120 / SAG 25.82 / UTEX 2576).